A 913-amino-acid polypeptide reads, in one-letter code: Rab GTPase-activating protein tbc-8 (913 aa).

Positions 1-24 (MQMFRHSSADMWRAKKPTLERRST) are disordered. The region spanning 106–240 (NLNSPYVTSL…TYRRMSNRIE (135 aa)) is the RUN domain. Positions 597–844 (INTKEVRRMA…KVWEVIWAAQ (248 aa)) constitute a Rab-GAP TBC domain.

This sequence belongs to the RUTBC family. As to quaternary structure, interacts with rab-19. Interacts with ric-19; the interaction is direct and may be required for the activation of rab-2 and dense vesicle maturation in cholinergic motoneurons. Interacts (via RUN domain) with rund-1. Does not interact with unc-108 (GTP-bound form). As to expression, expressed in neurons in the head, tail and ventral nerve cord (at protein level).

Its subcellular location is the golgi apparatus. It localises to the trans-Golgi network. It is found in the early endosome. The protein localises to the cytoplasmic vesicle membrane. In terms of biological role, interacts with numerous Rab family members, functioning as Rab effector for some, and as GTPase activator for others. GTPase activator for rab-2. In association with ric-19 activates rab-2 during dense core vesicle maturation in cholinergic motoneurons. In Caenorhabditis elegans, this protein is Rab GTPase-activating protein tbc-8.